Reading from the N-terminus, the 238-residue chain is ATP-dependent dethiobiotin synthetase BioD (238 aa).

Residue 13–18 (EIGKTV) coordinates ATP. Position 17 (T17) interacts with Mg(2+). K38 is a catalytic residue. T42 lines the substrate pocket. Residues R59 and E111 each coordinate Mg(2+). ATP contacts are provided by residues 111-114 (EGAG), 175-176 (NQ), and 204-206 (PLL).

This sequence belongs to the dethiobiotin synthetase family. Homodimer. It depends on Mg(2+) as a cofactor.

It localises to the cytoplasm. The catalysed reaction is (7R,8S)-7,8-diammoniononanoate + CO2 + ATP = (4R,5S)-dethiobiotin + ADP + phosphate + 3 H(+). The protein operates within cofactor biosynthesis; biotin biosynthesis; biotin from 7,8-diaminononanoate: step 1/2. Its function is as follows. Catalyzes a mechanistically unusual reaction, the ATP-dependent insertion of CO2 between the N7 and N8 nitrogen atoms of 7,8-diaminopelargonic acid (DAPA, also called 7,8-diammoniononanoate) to form a ureido ring. This Geobacillus kaustophilus (strain HTA426) protein is ATP-dependent dethiobiotin synthetase BioD.